We begin with the raw amino-acid sequence, 312 residues long: Olfactory receptor 10D3 (312 aa).

The Extracellular segment spans residues 1–26 (MEIKNCSVVTEFILLGIPHTEGFETL). Residue N5 is glycosylated (N-linked (GlcNAc...) asparagine). Residues 27 to 47 (LFVLFLPFYACTLVGNVSILV) form a helical membrane-spanning segment. Topologically, residues 48-57 (AVISSTRLHT) are cytoplasmic. The helical transmembrane segment at 58-78 (PMYFFLGNLSVFDMGFSSVTC) threads the bilayer. The Extracellular portion of the chain corresponds to 79-97 (PKMLFYLMGLSRLISYQDC). A disulfide bridge connects residues C97 and C179. The chain crosses the membrane as a helical span at residues 98-118 (VSQLFFFHFLGSIECFLYTVM). The Cytoplasmic portion of the chain corresponds to 119–139 (AYDRFAAICHPLRYSVIMNSK). A helical membrane pass occupies residues 140-160 (ICVALAVGTWLLGCFHSSVLT). Over 161 to 197 (SLTFTLPYCGPNEVDHFFCDIPAILPLASADTSLAQR) the chain is Extracellular. Residues 198–218 (VSFTNVGLVSLVCFLLILLSY) traverse the membrane as a helical segment. At 219 to 239 (TRITISILSIQSTEGRQRAFS) the chain is on the cytoplasmic side. A helical transmembrane segment spans residues 240–260 (TCSAHLIAILCAYGPIITIYL). At 261 to 266 (QPTPNP) the chain is on the extracellular side. A helical membrane pass occupies residues 267-287 (MLGTVVQILMNLVGPMLNPLI). Residues 288-312 (YTLRNKEVKIALKKILHGKGSVSEG) are Cytoplasmic-facing.

Belongs to the G-protein coupled receptor 1 family.

The protein localises to the cell membrane. In terms of biological role, potential odorant receptor. In Mus musculus (Mouse), this protein is Olfactory receptor 10D3.